Reading from the N-terminus, the 585-residue chain is MRFRSLISLLFLLFFTSSAYARFVSLNPSSTSLISDGIDGGSNLAGSGSVIKSVVSAPAEEKEEACEQTYGFMPCTKTALGNVFLILVYGFLMFTAATYLSAGSELLLEILGPGIVGGLFLPMLGALPDAMLIMVSGLSGDAATAQSQVSVGMGLLAGSTVMLLTVIWGTCTVVGKCDLRDSIAVNNQDTKGFHLKDSGVTVDIWTSYAARIMAISVIPFVIVQLPQMLGSTSGRQLSVLIALILSVLMLISYCVYQVFQPWIQRRRLAFAKHKHVISGILRHLKQHALGRLLDDEGQPDEHVIRKLFLTIDANNDGHLSAAELKALIIGISFEDIDFDKDDAVGKVLQDFDKTLDEQVDQEEFVRGIKQWLIQAMGGAPSGPEAGPRTMKFLDNFHVQTKREHALLGDNENGENDEEGGEVADPKWITIKAALLLLLGAAIAAAFADPLVDTVNNFSAATGIPSFFISFIALPLATNSSEAVSAIIFASRKKIRTASLTFSELCGGVTMNNILCLSVFLAIVYVRGLTWNFSSEVLVILIVCLVMGGFASFRTTYPLWTCFIAYLLYPFSLGLVYILDYWFGWS.

5 consecutive transmembrane segments (helical) span residues 83–103 (VFLI…LSAG), 106–126 (LLLE…MLGA), 149–169 (VSVG…VIWG), 212–232 (IMAI…LGST), and 239–259 (VLIA…YQVF). EF-hand domains follow at residues 299 to 334 (PDEH…ISFE) and 339 to 374 (DKDD…WLIQ). D312, N314, D316, H318, E323, D352, D356, Q358, and E363 together coordinate Ca(2+). The next 2 membrane-spanning stretches (helical) occupy residues 427–447 (WITI…AAFA) and 457–477 (FSAA…PLAT). N478 carries an N-linked (GlcNAc...) asparagine glycan. The next 3 helical transmembrane spans lie at 505-525 (CGGV…IVYV), 532-552 (FSSE…FASF), and 558-578 (LWTC…VYIL).

It belongs to the Ca(2+):cation antiporter (CaCA) (TC 2.A.19) family. Expressed in roots, leaves, stems, petals, stamens, ovules and siliques.

Its subcellular location is the cell membrane. It is found in the vacuole membrane. In terms of biological role, possesses sodium/calcium exchanger (NCX) activity when expressed in a heterologous mammalian CHO-K1 cell system. Does not possess cation/proton exchanger (CAX) or sodium/proton (NHX) activity when expressed in a heterologous yeast cell system. Has the ability to bind calcium in vitro. Participates in the maintenance of calcium homeostasis. May play a role in auxin response, diurnal rhythm and flowering time. Involved in salt stress response. This is Sodium/calcium exchanger NCL from Arabidopsis thaliana (Mouse-ear cress).